The following is a 159-amino-acid chain: 2-C-methyl-D-erythritol 2,4-cyclodiphosphate synthase (159 aa).

A divalent metal cation-binding residues include D10 and H12. Residues 10–12 (DVH) and 36–37 (HS) each bind 4-CDP-2-C-methyl-D-erythritol 2-phosphate. A divalent metal cation is bound at residue H44. Residues 58–60 (DIG), 134–137 (TTTE), F141, and R144 each bind 4-CDP-2-C-methyl-D-erythritol 2-phosphate.

This sequence belongs to the IspF family. In terms of assembly, homotrimer. A divalent metal cation is required as a cofactor.

It catalyses the reaction 4-CDP-2-C-methyl-D-erythritol 2-phosphate = 2-C-methyl-D-erythritol 2,4-cyclic diphosphate + CMP. The protein operates within isoprenoid biosynthesis; isopentenyl diphosphate biosynthesis via DXP pathway; isopentenyl diphosphate from 1-deoxy-D-xylulose 5-phosphate: step 4/6. Functionally, involved in the biosynthesis of isopentenyl diphosphate (IPP) and dimethylallyl diphosphate (DMAPP), two major building blocks of isoprenoid compounds. Catalyzes the conversion of 4-diphosphocytidyl-2-C-methyl-D-erythritol 2-phosphate (CDP-ME2P) to 2-C-methyl-D-erythritol 2,4-cyclodiphosphate (ME-CPP) with a corresponding release of cytidine 5-monophosphate (CMP). This chain is 2-C-methyl-D-erythritol 2,4-cyclodiphosphate synthase, found in Bacteroides fragilis (strain YCH46).